Here is a 157-residue protein sequence, read N- to C-terminus: Phosphopantetheine adenylyltransferase (157 aa).

Thr-10 lines the substrate pocket. ATP contacts are provided by residues 10-11 and His-18; that span reads TF. Lys-42, Leu-74, and Arg-88 together coordinate substrate. Residues 89-91, Glu-99, and 124-130 each bind ATP; these read GLR and NAFISSS.

This sequence belongs to the bacterial CoaD family. In terms of assembly, homohexamer. It depends on Mg(2+) as a cofactor.

The protein localises to the cytoplasm. The enzyme catalyses (R)-4'-phosphopantetheine + ATP + H(+) = 3'-dephospho-CoA + diphosphate. It participates in cofactor biosynthesis; coenzyme A biosynthesis; CoA from (R)-pantothenate: step 4/5. In terms of biological role, reversibly transfers an adenylyl group from ATP to 4'-phosphopantetheine, yielding dephospho-CoA (dPCoA) and pyrophosphate. This is Phosphopantetheine adenylyltransferase from Helicobacter pylori (strain J99 / ATCC 700824) (Campylobacter pylori J99).